The sequence spans 152 residues: 6,7-dimethyl-8-ribityllumazine synthase (152 aa).

Residues F24, 56-58 (SFE), and 80-82 (VVV) each bind 5-amino-6-(D-ribitylamino)uracil. 85 to 86 (ET) contributes to the (2S)-2-hydroxy-3-oxobutyl phosphate binding site. Catalysis depends on H88, which acts as the Proton donor. 5-amino-6-(D-ribitylamino)uracil is bound at residue F113. Position 127 (R127) interacts with (2S)-2-hydroxy-3-oxobutyl phosphate.

The protein belongs to the DMRL synthase family.

It carries out the reaction (2S)-2-hydroxy-3-oxobutyl phosphate + 5-amino-6-(D-ribitylamino)uracil = 6,7-dimethyl-8-(1-D-ribityl)lumazine + phosphate + 2 H2O + H(+). The protein operates within cofactor biosynthesis; riboflavin biosynthesis; riboflavin from 2-hydroxy-3-oxobutyl phosphate and 5-amino-6-(D-ribitylamino)uracil: step 1/2. Catalyzes the formation of 6,7-dimethyl-8-ribityllumazine by condensation of 5-amino-6-(D-ribitylamino)uracil with 3,4-dihydroxy-2-butanone 4-phosphate. This is the penultimate step in the biosynthesis of riboflavin. The polypeptide is 6,7-dimethyl-8-ribityllumazine synthase (Thermococcus onnurineus (strain NA1)).